Here is a 339-residue protein sequence, read N- to C-terminus: NADH-quinone oxidoreductase subunit H (339 aa).

The next 8 helical transmembrane spans lie at 7–27 (LFWITLKIMALVVPLMLAVAY), 77–97 (VLFVIAPLLAIMPALAAWAVI), 112–132 (LLYILAMTSLGVYGIIIAGWA), 149–169 (VVSYEIAMGFALVGVLMAAGS), 180–200 (AGGIFHWFWLPLLPLFLVYWI), 235–255 (VFFLAEYANMILISAVAAVMF), 276–296 (VPGVVWFMLKTAFFMFCYLWF), and 315–335 (VLIPVTVVWLIVLTIFIVTGF).

Belongs to the complex I subunit 1 family. In terms of assembly, NDH-1 is composed of 14 different subunits. Subunits NuoA, H, J, K, L, M, N constitute the membrane sector of the complex.

Its subcellular location is the cell inner membrane. It carries out the reaction a quinone + NADH + 5 H(+)(in) = a quinol + NAD(+) + 4 H(+)(out). In terms of biological role, NDH-1 shuttles electrons from NADH, via FMN and iron-sulfur (Fe-S) centers, to quinones in the respiratory chain. The immediate electron acceptor for the enzyme in this species is believed to be ubiquinone. Couples the redox reaction to proton translocation (for every two electrons transferred, four hydrogen ions are translocated across the cytoplasmic membrane), and thus conserves the redox energy in a proton gradient. This subunit may bind ubiquinone. The protein is NADH-quinone oxidoreductase subunit H of Alkalilimnicola ehrlichii (strain ATCC BAA-1101 / DSM 17681 / MLHE-1).